The sequence spans 782 residues: Chondroitin proteoglycan 4 (782 aa).

The first 18 residues, 1-18, serve as a signal peptide directing secretion; sequence MRLVYSLIFLLFIPFSHP. N-linked (GlcNAc...) asparagine glycosylation is found at Asn76, Asn208, Asn462, Asn468, Asn474, and Asn503. Residues 513 to 726 form a disordered region; the sequence is ISEKSTEESS…EDQGSGNYKK (214 aa). Low complexity-rich tracts occupy residues 520-532, 548-566, 573-612, 662-672, and 688-722; these read ESSG…SGDG, SGSS…SSGE, SSGS…SSDT, FGESSGSSGES, and SGSS…QGSG. N-linked (GlcNAc...) asparagine glycosylation occurs at Asn559. O-linked (Xyl...) (chondroitin sulfate) serine glycosylation is present at Ser691. The N-linked (GlcNAc...) asparagine glycan is linked to Asn699. Ser701, Ser704, Ser708, Ser714, and Ser721 each carry an O-linked (Xyl...) (chondroitin sulfate) serine glycan. N-linked (GlcNAc...) asparagine glycosylation occurs at Asn743.

This chain is Chondroitin proteoglycan 4, found in Caenorhabditis elegans.